Reading from the N-terminus, the 342-residue chain is uncharacterized protein (342 aa).

It belongs to the cycloisomerase 2 family.

This is an uncharacterized protein from Staphylococcus aureus (strain NCTC 8325 / PS 47).